The sequence spans 184 residues: Ethylene-responsive transcription factor ERF122 (184 aa).

The AP2/ERF DNA-binding region spans 120-177 (KYKGVRKKPSGKWAAEIWDPRSKSRRWLGTFLTAEMAAQSYNDAAAEYRARRGKTNGE).

It belongs to the AP2/ERF transcription factor family. ERF subfamily.

The protein resides in the nucleus. Its function is as follows. Probably acts as a transcriptional activator. Binds to the GCC-box pathogenesis-related promoter element. May be involved in the regulation of gene expression by stress factors and by components of stress signal transduction pathways. The sequence is that of Ethylene-responsive transcription factor ERF122 (ERF122) from Arabidopsis thaliana (Mouse-ear cress).